We begin with the raw amino-acid sequence, 194 residues long: Dihydrofolate reductase HdrB (194 aa).

One can recognise a DHFR domain in the interval 18 to 194; that stretch reads RFVLVAAVAD…ADRGAEESDE (177 aa). NADP(+) contacts are provided by residues A24 and 30 to 36; that span reads VIGRDGT. D44 is a substrate binding site. 62–63 contacts NADP(+); it reads KT. Substrate contacts are provided by R69 and R78. NADP(+) contacts are provided by residues 84–85 and 123–130; these read TT and GGATVYEQ. T141 contributes to the substrate binding site. Residues 173 to 194 form a disordered region; sequence SFVTYERKQPAAADRGAEESDE.

The protein belongs to the dihydrofolate reductase family.

The catalysed reaction is (6S)-5,6,7,8-tetrahydrofolate + NADP(+) = 7,8-dihydrofolate + NADPH + H(+). It functions in the pathway cofactor biosynthesis; tetrahydrofolate biosynthesis; 5,6,7,8-tetrahydrofolate from 7,8-dihydrofolate: step 1/1. Maximum activity at KCl concentration of 0.5 M and activity decreases with increasing concentration of KCl. In terms of biological role, key enzyme in folate metabolism. Catalyzes an essential reaction for de novo glycine and purine synthesis, and for DNA precursor synthesis. The sequence is that of Dihydrofolate reductase HdrB (hdrB) from Haloferax volcanii (Halobacterium volcanii).